A 1155-amino-acid polypeptide reads, in one-letter code: Alpha,alpha-trehalose-phosphate synthase [UDP-forming] 1 (1155 aa).

The tract at residues 56 to 94 (LQRRRSVSSRGGSLRGSMDSLNDSGQNGAEDVIGVEDEE) is disordered. Residues 63 to 72 (SSRGGSLRGS) show a composition bias toward low complexity.

It in the N-terminal section; belongs to the glycosyltransferase 20 family. The protein in the C-terminal section; belongs to the gob-1 trehalose phosphatase family.

The enzyme catalyses D-glucose 6-phosphate + UDP-alpha-D-glucose = alpha,alpha-trehalose 6-phosphate + UDP + H(+). In terms of biological role, catalyzes the production of trehalose from glucose-6-phosphate and UDP-alpha-D-glucose in a 2 step process. The sequence is that of Alpha,alpha-trehalose-phosphate synthase [UDP-forming] 1 (tps-1) from Aphelenchoides avenae (Mycophagous nematode worm).